A 208-amino-acid chain; its full sequence is 3-isopropylmalate dehydratase small subunit 2 (208 aa).

The protein belongs to the LeuD family. LeuD type 1 subfamily. As to quaternary structure, heterodimer of LeuC and LeuD.

It catalyses the reaction (2R,3S)-3-isopropylmalate = (2S)-2-isopropylmalate. It functions in the pathway amino-acid biosynthesis; L-leucine biosynthesis; L-leucine from 3-methyl-2-oxobutanoate: step 2/4. Functionally, catalyzes the isomerization between 2-isopropylmalate and 3-isopropylmalate, via the formation of 2-isopropylmaleate. In Salmonella choleraesuis (strain SC-B67), this protein is 3-isopropylmalate dehydratase small subunit 2.